The chain runs to 139 residues: Aspartate 1-decarboxylase (139 aa).

S25 (schiff-base intermediate with substrate; via pyruvic acid) is an active-site residue. Residue S25 is modified to Pyruvic acid (Ser). T57 is a substrate binding site. Catalysis depends on Y58, which acts as the Proton donor. 73-75 serves as a coordination point for substrate; sequence GAA.

This sequence belongs to the PanD family. As to quaternary structure, heterooctamer of four alpha and four beta subunits. Pyruvate serves as cofactor. Post-translationally, is synthesized initially as an inactive proenzyme, which is activated by self-cleavage at a specific serine bond to produce a beta-subunit with a hydroxyl group at its C-terminus and an alpha-subunit with a pyruvoyl group at its N-terminus.

The protein resides in the cytoplasm. It catalyses the reaction L-aspartate + H(+) = beta-alanine + CO2. It functions in the pathway cofactor biosynthesis; (R)-pantothenate biosynthesis; beta-alanine from L-aspartate: step 1/1. Catalyzes the pyruvoyl-dependent decarboxylation of aspartate to produce beta-alanine. This is Aspartate 1-decarboxylase from Mycobacterium bovis (strain BCG / Tokyo 172 / ATCC 35737 / TMC 1019).